We begin with the raw amino-acid sequence, 591 residues long: MRVSTIRSGRICRLALCLLVLLPLLYLLANWSDHHKRVQEAYHTRFGGPKFAHQRLEGRPREVPKLVDGLGNFEPKDVKPRSGPGENGEAHSLSPDKKHMSDASEMEYGMNIACSDEISMHRSVRDTRLEECRHWDYPFDLPRTSVIIVFHNEGFSVLMRTVHSVIDRSPTHMLHEIILVDDFSDKENLRSQLDEYVLQFKGLVKVIRNKEREGLIRTRSRGAMEATGEVIVFLDAHCEVNTNWLPPLLAPIYRDRTVMTVPIIDGIDHKNFEYRPVYGTDNHFRGIFEWGMLYKENEVPRREQRRRAHNSEPYRSPTHAGGLFAINREYFLELGAYDPGLLVWGGENFELSFKIWQCGGSIEWVPCSRVGHVYRGFMPYNFGKLASKKKGPLITINYKRVIETWFDDTHKEYFYTREPLARYLDMGDISEQLALKKRLNCKSFQWFMDHIAYDVYDKFPGLPANLHWGELRSVASDGCLDSMGHQPPAIMGLTYCHGGGNNQLVRLNAAGQLGVGERCVEADRQGIKLAVCRLGTVDGPWQYNEHTKHLMHRVHKKCMALHPATQQLSLGHCDVNDSYQQWWFKEIRPRW.

Topologically, residues 1–11 (MRVSTIRSGRI) are cytoplasmic. A helical; Signal-anchor for type II membrane protein membrane pass occupies residues 12–29 (CRLALCLLVLLPLLYLLA). A glycan (N-linked (GlcNAc...) asparagine) is linked at asparagine 30. Topologically, residues 30 to 591 (NWSDHHKRVQ…WWFKEIRPRW (562 aa)) are lumenal. The tract at residues 68–100 (DGLGNFEPKDVKPRSGPGENGEAHSLSPDKKHM) is disordered. 5 disulfide bridges follow: cysteine 132-cysteine 367, cysteine 358-cysteine 441, cysteine 479-cysteine 496, cysteine 519-cysteine 532, and cysteine 558-cysteine 573. The segment at 141–251 (LPRTSVIIVF…TNWLPPLLAP (111 aa)) is catalytic subdomain A. The substrate site is built by aspartate 182 and arginine 212. Mn(2+) contacts are provided by aspartate 235 and histidine 237. Residues 313–375 (PYRSPTHAGG…PCSRVGHVYR (63 aa)) form a catalytic subdomain B region. Tryptophan 344 is a substrate binding site. Histidine 372 provides a ligand contact to Mn(2+). Substrate is bound by residues arginine 375 and tyrosine 380. Residues 466-585 (LHWGELRSVA…NDSYQQWWFK (120 aa)) form the Ricin B-type lectin domain. Residue asparagine 576 is glycosylated (N-linked (GlcNAc...) asparagine).

Belongs to the glycosyltransferase 2 family. GalNAc-T subfamily. The cofactor is Mn(2+). Expressed in developing oocytes and egg chambers. During embryonic stages 9-11, expressed in the primordium of the foregut, midgut and hindgut. Expressed in the salivary glands from embryonic stage 12 onwards. During embryonic stages 12-13, expressed in the posterior midgut and hindgut. During embryonic stages 14-15, expression continues in the hindgut. During embryonic stages 16-17, expressed in the antennomaxillary complex. In third instar larvae, ubiquitously expressed in wing, with increased expression in the notum and ventral wing pouch, eye-antennal, leg and haltere imaginal disks.

It localises to the golgi apparatus membrane. It catalyses the reaction L-seryl-[protein] + UDP-N-acetyl-alpha-D-galactosamine = a 3-O-[N-acetyl-alpha-D-galactosaminyl]-L-seryl-[protein] + UDP + H(+). The catalysed reaction is L-threonyl-[protein] + UDP-N-acetyl-alpha-D-galactosamine = a 3-O-[N-acetyl-alpha-D-galactosaminyl]-L-threonyl-[protein] + UDP + H(+). It participates in protein modification; protein glycosylation. Its function is as follows. Glycopeptide transferase involved in O-linked oligosaccharide biosynthesis, which catalyzes the transfer of an N-acetyl-D-galactosamine residue to an already glycosylated peptide. In contrast to other proteins of the family, it does not act as a peptide transferase that transfers GalNAc onto serine or threonine residue on the protein receptor, but instead requires the prior addition of a GalNAc on a peptide before adding additional GalNAc moieties. Some peptide transferase activity is however not excluded, considering that its appropriate peptide substrate may remain unidentified. Prefers the monoglycosylated Muc5AC-3 as substrate. Might have a role in protein O-glycosylation in the Golgi and thereby in establishing and/or maintaining a proper secretory apparatus structure. This Drosophila melanogaster (Fruit fly) protein is N-acetylgalactosaminyltransferase 7.